The primary structure comprises 695 residues: Nucleoprotein (695 aa).

2 coiled-coil regions span residues 316 to 341 (VNVG…RRHE) and 372 to 399 (QTLA…VEDQ). Positions 424–611 (QARPMNRPTA…SPSAPQEDTR (188 aa)) are disordered. Over residues 438–447 (VDDKIEHEST) the composition is skewed to basic and acidic residues. 2 stretches are compositionally biased toward polar residues: residues 495 to 505 (RQSQDLNNSQG) and 537 to 552 (TTDS…SDNE). Positions 603–606 (PSAP) match the PTAP/PSAP motif motif.

Belongs to the filoviruses nucleoprotein family. In terms of assembly, homooligomer. Homomultimerizes to form the nucleocapsid. Binds to viral genomic RNA. Interacts with VP35 and VP30 to form the nucleocapsid. Also interacts with VP24 and VP40. Post-translationally, phosphorylated.

It is found in the virion. The protein localises to the host cytoplasm. Functionally, encapsidates the genome, protecting it from nucleases. The encapsidated genomic RNA is termed the nucleocapsid and serves as template for transcription and replication. During replication, encapsidation by NP is coupled to RNA synthesis and all replicative products are resistant to nucleases. This is Nucleoprotein (NP) from Chlorocebus aethiops (Green monkey).